The following is a 155-amino-acid chain: Putative pre-16S rRNA nuclease (155 aa).

The protein belongs to the YqgF nuclease family.

It is found in the cytoplasm. Functionally, could be a nuclease involved in processing of the 5'-end of pre-16S rRNA. The protein is Putative pre-16S rRNA nuclease of Wolbachia sp. subsp. Brugia malayi (strain TRS).